Reading from the N-terminus, the 189-residue chain is Recombination protein RecR (189 aa).

The segment at 48–63 adopts a C4-type zinc-finger fold; sequence CQTCFHLSAEPLCDIC. Positions 71 to 165 constitute a Toprim domain; sequence QLLCVVADSR…QVSRIAYGLP (95 aa).

It belongs to the RecR family.

Functionally, may play a role in DNA repair. It seems to be involved in an RecBC-independent recombinational process of DNA repair. It may act with RecF and RecO. The polypeptide is Recombination protein RecR (Prochlorococcus marinus (strain MIT 9303)).